We begin with the raw amino-acid sequence, 566 residues long: MKISRQAYADMFGPTVGDKVRLADTELWIEVEKDFTTYGEEVKFGGGKVIRDGMGQGQLLAAEVVDTLITNALIIDHWGIVKADVGIKNGRIAAIGKAGNPDIQPDVTIAVGAATEVIAGEGMILTAGGVDTHIHFICPQQIEEALMSGVTTMIGGGTGPATGTNATTVTPGPWHMARMLQASDSFPMNIGFTGKGNVSLPGPLIEQVKAGAIGLKLHEDWGTTPAAIDNCLSVADEYDVQVAIHTDTLNESGFVETTLAAFKNRTIHTYHTEGAGGGHAPDIIKACGSPNVLPSSTNPTRPFTRNTIDEHLDMLMVCHHLDPSIAEDVAFAESRIRRETIAAEDILHDLGAFSMLSSDSQAMGRVGEVIMRTWQTADKMKKQRGPLPQDGPGNDNFRAKRYIAKYTINPAITHGISHEVGSIEVGKWADLVLWRPAFFGVKPTLILKGGAIAASLMGDANASIPTPQPVHYRPMFASFGSSLHATSLTFISQAAFDAGVPESLGLKKQIGVVKGCRTVQKKDLIHNDYLPDIEVDPQTYQVKADGVLLWCEPADVLPMAQRYFLF.

Residues 128–566 (GGVDTHIHFI…LPMAQRYFLF (439 aa)) enclose the Urease domain. Histidine 133, histidine 135, and lysine 216 together coordinate Ni(2+). Lysine 216 is modified (N6-carboxylysine). Residue histidine 218 coordinates substrate. Histidine 245 and histidine 271 together coordinate Ni(2+). Histidine 319 acts as the Proton donor in catalysis. Residue aspartate 359 coordinates Ni(2+).

It belongs to the metallo-dependent hydrolases superfamily. Urease alpha subunit family. In terms of assembly, may form a heterohexamer of 3 UreC (alpha) and 3 UreAB (gamma/beta) subunits. May also form a heterotrimer of UreA (gamma), UreB (beta) and UreC (alpha) subunits. Three heterotrimers associate to form the active enzyme. Requires Ni cation as cofactor. In terms of processing, carboxylation allows a single lysine to coordinate two nickel ions.

It localises to the cytoplasm. The catalysed reaction is urea + 2 H2O + H(+) = hydrogencarbonate + 2 NH4(+). Its pathway is nitrogen metabolism; urea degradation; CO(2) and NH(3) from urea (urease route): step 1/1. In Pseudomonas syringae pv. syringae (strain B728a), this protein is Urease subunit alpha 2.